Reading from the N-terminus, the 530-residue chain is MESIINLIFYIIIFLILIDFLKKNISFRKNEPPRGGVAFPIFGDLPKLGENPHRYLTNLAMKKGGIYSVWLGDEKVFILTDPEAVRDAWVKQFRNFSDHPKTKSVRIFSGNFNDMAFAEYSQWKINSKWVSSAFTKTKLKTIGDLIEKESNYFIEHLKAYSNSGQPIFPKPYISKFGINVISGMMFSQVISKDESVDKGAMEKLTVPIQAVFKRLGADNLDDFISILQPVFYFQNEKFKRQVQEIYDYLEGIYNQHDTNLDTENPKDLMDLLIISTEGKERDMIIHIGMDCLLAGSDSTSATCEWFCLFMINNPDVQKKAYQELINALKDEDNKKFIPISKKDNCPYMLSIFKEVLRLRPVGVLGIPRVALEETTIMGYTIPKGSQIFQNVYGMSHLFVSDPYKFKPERWIEYKKQKDLLKEKEMQQLQEGADVVIDNKNNIKNNNSSNKPNSKTNSIFDDLDKVSIPYSVGNRKCPGASLSELALFSLCSNILLNFELKSIDGKPIDDTEVYGLTIHTKVHPISLTLRP.

Residues 1–21 (MESIINLIFYIIIFLILIDFL) form a helical membrane-spanning segment. C476 contacts heme.

This sequence belongs to the cytochrome P450 family. It depends on heme as a cofactor.

It is found in the membrane. This Dictyostelium discoideum (Social amoeba) protein is Probable cytochrome P450 519A1 (cyp519A1).